A 637-amino-acid chain; its full sequence is Formate--tetrahydrofolate ligase (637 aa).

81–88 (TPLGEGKS) is a binding site for ATP.

This sequence belongs to the formate--tetrahydrofolate ligase family. As to quaternary structure, homodimer.

The catalysed reaction is (6S)-5,6,7,8-tetrahydrofolate + formate + ATP = (6R)-10-formyltetrahydrofolate + ADP + phosphate. Its pathway is one-carbon metabolism; tetrahydrofolate interconversion. The chain is Formate--tetrahydrofolate ligase from Spinacia oleracea (Spinach).